Here is a 284-residue protein sequence, read N- to C-terminus: MEAIKNKMQAMKLEKDNAIDRAEIAEQKSRDANLRAEKSEEEVRGLQKKIQQIENELDQVQESLTQANTKLEEKEKSLQTAEGDVAALNRRIQLIEEDLERSEGRLKIATSKLEEASQSADESERMRKMLEHRSITDEERMEGLESQLKEARMMAEDADRKYDEVARKLAMVEADLERAEERAETGESKIVELEEELRVVGNNLKSLEVSEEKAQQREEAYEQQIRIMTTKLKEAEARAEFAERSVQKLQKEVDRLEDELVHEKEKYKSISDELDQTFAELTGY.

The stretch at 1–284 (MEAIKNKMQA…DQTFAELTGY (284 aa)) forms a coiled coil. The interval 22 to 43 (AEIAEQKSRDANLRAEKSEEEV) is disordered.

It belongs to the tropomyosin family. In terms of assembly, homodimer.

Tropomyosin, in association with the troponin complex, plays a central role in the calcium dependent regulation of muscle contraction. This chain is Tropomyosin, found in Lepidoglyphus destructor (Storage mite).